The primary structure comprises 212 residues: Protein irg-1 (212 aa).

Expressed in the intestine.

Its function is as follows. Plays a role in innate immunity by conferring resistance to virulent strains of the Gram-negative bacterium P.aeruginosa via the zip-2 pathway. Can act independently of several immunity-related pathways including pmk-1 p38MAPK, dbl-1 TGF-beta, kgb-1 JNK and bar-1/beta-catenin pathways. This chain is Protein irg-1, found in Caenorhabditis elegans.